We begin with the raw amino-acid sequence, 204 residues long: MECNLVNLSNDNVGTAQLNPLIFSAKQKLSILHDIVRWQLAKRRAGTHKTKGISDVSGTTAKPYGQKRTGRARQGSLRSPQFRGGGIIFGPVVRSHTYSLNKKVRKFGLKIALSLKYLNNQVIILDNLNIDVKKTSEMCKCIKNFKFSSFLIVGDYGDDLLRAAKNLHYVDLIKPIGLNVFDILNHECVMLTKDTLKHLEGRLL.

The interval 49–76 is disordered; sequence KTKGISDVSGTTAKPYGQKRTGRARQGS.

The protein belongs to the universal ribosomal protein uL4 family. In terms of assembly, part of the 50S ribosomal subunit.

In terms of biological role, one of the primary rRNA binding proteins, this protein initially binds near the 5'-end of the 23S rRNA. It is important during the early stages of 50S assembly. It makes multiple contacts with different domains of the 23S rRNA in the assembled 50S subunit and ribosome. Forms part of the polypeptide exit tunnel. The sequence is that of Large ribosomal subunit protein uL4 from Wolbachia sp. subsp. Drosophila simulans (strain wRi).